The chain runs to 324 residues: Kelch domain-containing protein PF0436 (324 aa).

Kelch repeat units follow at residues Glu112 to Gly160, Gly254 to Arg301, and Ile303 to Lys323.

This chain is Kelch domain-containing protein PF0436, found in Pyrococcus furiosus (strain ATCC 43587 / DSM 3638 / JCM 8422 / Vc1).